The chain runs to 33 residues: Cytochrome b6-f complex subunit 5 (33 aa).

The chain crosses the membrane as a helical span at residues 5–25 (LLFGIILGLISCVLAGLFVSA).

The protein belongs to the PetG family. In terms of assembly, the 4 large subunits of the cytochrome b6-f complex are cytochrome b6, subunit IV (17 kDa polypeptide, PetD), cytochrome f and the Rieske protein, while the 4 small subunits are PetG, PetL, PetM and PetN. The complex functions as a dimer.

It localises to the plastid. It is found in the chloroplast thylakoid membrane. In terms of biological role, component of the cytochrome b6-f complex, which mediates electron transfer between photosystem II (PSII) and photosystem I (PSI), cyclic electron flow around PSI, and state transitions. PetG is required for either the stability or assembly of the cytochrome b6-f complex. This is Cytochrome b6-f complex subunit 5 from Bigelowiella natans (Pedinomonas minutissima).